Consider the following 362-residue polypeptide: Chorismate synthase (362 aa).

R48 and R54 together coordinate NADP(+). FMN contacts are provided by residues 131 to 133, 243 to 244, G287, 302 to 306, and R328; these read RSS, NA, and KPTSS.

Belongs to the chorismate synthase family. In terms of assembly, homotetramer. It depends on FMNH2 as a cofactor.

The enzyme catalyses 5-O-(1-carboxyvinyl)-3-phosphoshikimate = chorismate + phosphate. It participates in metabolic intermediate biosynthesis; chorismate biosynthesis; chorismate from D-erythrose 4-phosphate and phosphoenolpyruvate: step 7/7. In terms of biological role, catalyzes the anti-1,4-elimination of the C-3 phosphate and the C-6 proR hydrogen from 5-enolpyruvylshikimate-3-phosphate (EPSP) to yield chorismate, which is the branch point compound that serves as the starting substrate for the three terminal pathways of aromatic amino acid biosynthesis. This reaction introduces a second double bond into the aromatic ring system. The sequence is that of Chorismate synthase from Rhodopseudomonas palustris (strain TIE-1).